Reading from the N-terminus, the 347-residue chain is D-alanine--D-alanine ligase (347 aa).

The ATP-grasp domain occupies 131-333; sequence KRVLESAGIA…YPELIERLVD (203 aa). 161–216 is a binding site for ATP; it reads EEKLAYPVFTKPSNMGSSVGISKSENQEELRQALKLAFRYDSRVLVEQGVNAREIE. Mg(2+) is bound by residues aspartate 287, glutamate 300, and asparagine 302.

Belongs to the D-alanine--D-alanine ligase family. The cofactor is Mg(2+). It depends on Mn(2+) as a cofactor.

It localises to the cytoplasm. It catalyses the reaction 2 D-alanine + ATP = D-alanyl-D-alanine + ADP + phosphate + H(+). Its pathway is cell wall biogenesis; peptidoglycan biosynthesis. Cell wall formation. The polypeptide is D-alanine--D-alanine ligase (Streptococcus pneumoniae (strain ATCC BAA-255 / R6)).